The primary structure comprises 100 residues: Suppressor of silencing 2b (100 aa).

Residues 22-27 (KRRRRR) carry the Nuclear localization signal motif.

The protein belongs to the cucumovirus/ilarvirus protein 2b family. As to quaternary structure, homotetramer. Interacts with host AGO1; this interaction blocks AGO1 cleavage activity to attenuate RNA silencing and thus counter host defense. Interacts with host JAZ.

The protein localises to the host nucleus. Multifunctional protein that plays two independent roles: viral suppressor of host RNAi (VSR) and viral inducer of host attractiveness to insect vectors (VIA). Acts as a suppressor of RNA-mediated gene silencing, also known as post-transcriptional gene silencing (PTGS), a mechanism of plant viral defense that limits the accumulation of viral RNAs. May directly interfere with mobile silencing signaling. Also inhibits signal transduction by the phytohormone jasmonate, making the infected plant more attractive to aphids, which are the second host to play a role as a dissemination vector. Acts by binding to and inhibiting JAZ degradation in the host. The sequence is that of Suppressor of silencing 2b from Cucumis sativus (Cucumber).